The sequence spans 910 residues: Eukaryotic translation initiation factor 3 subunit C (910 aa).

The interval 1–21 (MSRFFANGSDSESESSEDEIQ) is disordered. The segment covering 11 to 20 (SESESSEDEI) has biased composition (acidic residues). Ser34, Ser165, Ser176, and Ser185 each carry phosphoserine. A disordered region spans residues 157–279 (FREAPDQESE…IRKRAEDDED (123 aa)). Over residues 162-186 (DQESEAEDEVVALESDGGDAGDDSD) the composition is skewed to acidic residues. Over residues 188–207 (GVKPTEAAPKAVKTAPAKAA) the composition is skewed to low complexity. Residues 209–235 (ADDDDSDDSIDWDSDSESETESSDDEN) show a composition bias toward acidic residues. The segment covering 240-268 (MRERFLKRTTEKEEKDDDKRKDKRKEQKI) has biased composition (basic and acidic residues). The PCI domain maps to 639–815 (FHMHINLELL…ETVVMHRSEP (177 aa)). Positions 847–910 (FFQRGNMGNR…QQQVQTIDEE (64 aa)) are disordered. A compositionally biased stretch (low complexity) spans 862–874 (NRNQNNQGGNWLG). A compositionally biased stretch (basic residues) spans 882-891 (RNRNQRGHHK). Low complexity predominate over residues 895–910 (DRQQQQQQQVQTIDEE).

It belongs to the eIF-3 subunit C family. In terms of assembly, component of the eukaryotic translation initiation factor 3 (eIF-3) complex. The eIF-3 complex interacts with pix.

It is found in the cytoplasm. Functionally, component of the eukaryotic translation initiation factor 3 (eIF-3) complex, which is involved in protein synthesis of a specialized repertoire of mRNAs and, together with other initiation factors, stimulates binding of mRNA and methionyl-tRNAi to the 40S ribosome. The eIF-3 complex specifically targets and initiates translation of a subset of mRNAs involved in cell proliferation. This is Eukaryotic translation initiation factor 3 subunit C from Drosophila erecta (Fruit fly).